The chain runs to 180 residues: Large ribosomal subunit protein uL6 (180 aa).

This sequence belongs to the universal ribosomal protein uL6 family. As to quaternary structure, part of the 50S ribosomal subunit.

Functionally, this protein binds to the 23S rRNA, and is important in its secondary structure. It is located near the subunit interface in the base of the L7/L12 stalk, and near the tRNA binding site of the peptidyltransferase center. The protein is Large ribosomal subunit protein uL6 of Thermodesulfovibrio yellowstonii (strain ATCC 51303 / DSM 11347 / YP87).